The sequence spans 448 residues: Bifunctional protein GlmU (448 aa).

Residues 1 to 229 (MNNHTLNIII…NDEIQGINNL (229 aa)) form a pyrophosphorylase region. Residues 11 to 14 (LAAG), Lys-25, Gln-76, 81 to 82 (GT), 103 to 105 (YGD), Gly-140, Glu-154, Asn-169, and Asn-227 each bind UDP-N-acetyl-alpha-D-glucosamine. Asp-105 provides a ligand contact to Mg(2+). Position 227 (Asn-227) interacts with Mg(2+). Residues 230 to 250 (LQLVRAEKIYQKQQAKLLLLS) are linker. An N-acetyltransferase region spans residues 251-448 (GIMIYNPSNF…NEKKQIHKKL (198 aa)). Residue Lys-351 coordinates UDP-N-acetyl-alpha-D-glucosamine. The Proton acceptor role is filled by His-363. 2 residues coordinate UDP-N-acetyl-alpha-D-glucosamine: Tyr-366 and Asn-377. Residues Ala-380, 386 to 387 (NY), Ser-405, and Ala-423 each bind acetyl-CoA.

In the N-terminal section; belongs to the N-acetylglucosamine-1-phosphate uridyltransferase family. The protein in the C-terminal section; belongs to the transferase hexapeptide repeat family. Homotrimer. It depends on Mg(2+) as a cofactor.

The protein resides in the cytoplasm. It catalyses the reaction alpha-D-glucosamine 1-phosphate + acetyl-CoA = N-acetyl-alpha-D-glucosamine 1-phosphate + CoA + H(+). The enzyme catalyses N-acetyl-alpha-D-glucosamine 1-phosphate + UTP + H(+) = UDP-N-acetyl-alpha-D-glucosamine + diphosphate. Its pathway is nucleotide-sugar biosynthesis; UDP-N-acetyl-alpha-D-glucosamine biosynthesis; N-acetyl-alpha-D-glucosamine 1-phosphate from alpha-D-glucosamine 6-phosphate (route II): step 2/2. It functions in the pathway nucleotide-sugar biosynthesis; UDP-N-acetyl-alpha-D-glucosamine biosynthesis; UDP-N-acetyl-alpha-D-glucosamine from N-acetyl-alpha-D-glucosamine 1-phosphate: step 1/1. It participates in bacterial outer membrane biogenesis; LPS lipid A biosynthesis. Functionally, catalyzes the last two sequential reactions in the de novo biosynthetic pathway for UDP-N-acetylglucosamine (UDP-GlcNAc). The C-terminal domain catalyzes the transfer of acetyl group from acetyl coenzyme A to glucosamine-1-phosphate (GlcN-1-P) to produce N-acetylglucosamine-1-phosphate (GlcNAc-1-P), which is converted into UDP-GlcNAc by the transfer of uridine 5-monophosphate (from uridine 5-triphosphate), a reaction catalyzed by the N-terminal domain. This Buchnera aphidicola subsp. Baizongia pistaciae (strain Bp) protein is Bifunctional protein GlmU.